Consider the following 122-residue polypeptide: Large ribosomal subunit protein uL14 (122 aa).

The protein belongs to the universal ribosomal protein uL14 family. Part of the 50S ribosomal subunit. Forms a cluster with proteins L3 and L19. In the 70S ribosome, L14 and L19 interact and together make contacts with the 16S rRNA in bridges B5 and B8.

Its function is as follows. Binds to 23S rRNA. Forms part of two intersubunit bridges in the 70S ribosome. The protein is Large ribosomal subunit protein uL14 of Lactobacillus delbrueckii subsp. bulgaricus (strain ATCC 11842 / DSM 20081 / BCRC 10696 / JCM 1002 / NBRC 13953 / NCIMB 11778 / NCTC 12712 / WDCM 00102 / Lb 14).